The following is a 143-amino-acid chain: uncharacterized protein (143 aa).

Residues 1-24 (MKKMLMLAFTFLLALTIHVGEASA) form the signal peptide.

This is an uncharacterized protein from Bacillus subtilis (strain 168).